A 156-amino-acid chain; its full sequence is MATPPKRRAVEATAEKVLRYEAFISDVLQRDLQKVLDHRDKVYEQLAKYLQLRNVIERLQEANHSELYMQVDLGCNFFVDTVVPDTSRIYVALGYGFFLELTLAEALKFIDRKSSLLTELSDNLTKDSMNIKAHIHMLLEGLRELQGLQNFPETQH.

Belongs to the UXT family. As to quaternary structure, homohexamer. Component of the PAQosome complex which is responsible for the biogenesis of several protein complexes and which consists of R2TP complex members RUVBL1, RUVBL2, RPAP3 and PIH1D1, URI complex members PFDN2, PFDN6, PDRG1, UXT and URI1 as well as ASDURF, POLR2E and DNAAF10/WDR92. Interacts with LRPPRC. Interacts with androgen receptor AR (via N-terminus). Interacts with estrogen receptor ESR1; the interaction relocalizes ESR1 to the cytoplasm. In the nucleus, interacts specifically with RELA (via RHD domain) and forms a dynamic complex with NF-kappa-B and is recruited to the NF-kappa-B enhanceosome upon stimulation. Interacts with MECOM. Interacts with URI1.

The protein localises to the cytoplasm. The protein resides in the nucleus. It is found in the cytoskeleton. It localises to the microtubule organizing center. Its subcellular location is the centrosome. The protein localises to the spindle pole. Functionally, involved in gene transcription regulation. Acts in concert with the corepressor URI1 to regulate androgen receptor AR-mediated transcription. Together with URI1, associates with chromatin to the NKX3-1 promoter region. Negatively regulates the transcriptional activity of the estrogen receptor ESR1 by inducing its translocation into the cytoplasm. May act as nuclear chaperone that facilitates the formation of the NF-kappa-B enhanceosome and thus positively regulates NF-kappa-B transcription activity. Potential component of mitochondrial-associated LRPPRC, a multidomain organizer that potentially integrates mitochondria and the microtubular cytoskeleton with chromosome remodeling. Increasing concentrations of UXT contributes to progressive aggregation of mitochondria and cell death potentially through its association with LRPPRC. Suppresses cell transformation and it might mediate this function by interaction and inhibition of the biological activity of cell proliferation and survival stimulatory factors like MECOM. In Bos taurus (Bovine), this protein is Protein UXT (UXT).